The following is an 85-amino-acid chain: Large ribosomal subunit protein bL27 (85 aa).

The protein belongs to the bacterial ribosomal protein bL27 family.

The protein is Large ribosomal subunit protein bL27 of Solibacter usitatus (strain Ellin6076).